The primary structure comprises 465 residues: Muscarinic acetylcholine receptor M2 (465 aa).

The Extracellular portion of the chain corresponds to 1 to 21; the sequence is MNNSTNSSNNVALTSPYKTFE. N2, N3, and N6 each carry an N-linked (GlcNAc...) asparagine glycan. A helical transmembrane segment spans residues 22–44; that stretch reads VVFIVLVAGSLSLVTIIGNILVM. The Cytoplasmic segment spans residues 45–58; sequence VSIKVNRHLQTVNN. A helical membrane pass occupies residues 59 to 79; sequence YFLFSLACADLIIGVFSMNLY. Residues 80–96 lie on the Extracellular side of the membrane; sequence TLYTVIGYWPLGPVVCD. Cysteines 95 and 175 form a disulfide. Residues 97 to 118 traverse the membrane as a helical segment; sequence LWLALDYVVSNASVMNLLIISF. The short motif at 119 to 121 is the Important for signaling element; that stretch reads DRY. Topologically, residues 119–138 are cytoplasmic; it reads DRYFCVTKPLTYPVKRTTKM. The helical transmembrane segment at 139-161 threads the bilayer; the sequence is AGMMIAAAWVLSFILWAPAILFW. Over 162-183 the chain is Extracellular; the sequence is QFIVGVRTVEDGECYIQFFSNA. The helical transmembrane segment at 184 to 208 threads the bilayer; it reads AVTFGTAIAAFYLPVIIMTVLYWHI. Residues 209-386 lie on the Cytoplasmic side of the membrane; sequence SRASKSRIKK…PPSREKKVTR (178 aa). Residues 217-319 form a disordered region; sequence KKDKKEPVAN…SVGHSKDENS (103 aa). At S231 the chain carries Phosphoserine. Residues 253 to 269 are compositionally biased toward basic and acidic residues; it reads GLEHNKIQNGKTPRDAV. Composition is skewed to polar residues over residues 283-292 and 303-312; these read NDSTSVSAVA and DENTVSTSVG. The helical transmembrane segment at 387-409 threads the bilayer; the sequence is TILAILLAFIITWAPYNVMVLIN. The Extracellular segment spans residues 410–417; that stretch reads TFCAPCIP. C412 and C415 are joined by a disulfide. The chain crosses the membrane as a helical span at residues 418–441; that stretch reads NTVWTIGYWLCYINSTINPACYAL. The short motif at 435–439 is the Important for signaling element; the sequence is NPACY. Residues 442-465 lie on the Cytoplasmic side of the membrane; sequence CNATFKKTFKHLLMCHYKNIGATR. T445, T449, and T464 each carry phosphothreonine.

The protein belongs to the G-protein coupled receptor 1 family. Muscarinic acetylcholine receptor subfamily. CHRM2 sub-subfamily. In terms of assembly, interacts with ARRB1 and ARRB2. Interacts with RACK1; the interaction regulates CHRM2 internalization. In terms of processing, phosphorylated in response to agonist treatment.

Its subcellular location is the cell membrane. The protein resides in the postsynaptic cell membrane. The muscarinic acetylcholine receptor mediates various cellular responses, including inhibition of adenylate cyclase, breakdown of phosphoinositides and modulation of potassium channels through the action of G proteins. Primary transducing effect is adenylate cyclase inhibition. Signaling promotes phospholipase C activity, leading to the release of inositol trisphosphate (IP3); this then triggers calcium ion release into the cytosol. The sequence is that of Muscarinic acetylcholine receptor M2 (CHRM2) from Bos taurus (Bovine).